A 418-amino-acid chain; its full sequence is L-rhamnose isomerase (418 aa).

Mn(2+)-binding residues include His-262, Asp-294, and Asp-296.

This sequence belongs to the rhamnose isomerase family. In terms of assembly, homotetramer. The cofactor is Mn(2+).

Its subcellular location is the cytoplasm. It carries out the reaction L-rhamnopyranose = L-rhamnulose. It participates in carbohydrate degradation; L-rhamnose degradation; glycerone phosphate from L-rhamnose: step 1/3. Functionally, catalyzes the interconversion of L-rhamnose and L-rhamnulose. The sequence is that of L-rhamnose isomerase from Yersinia pseudotuberculosis serotype O:1b (strain IP 31758).